A 186-amino-acid chain; its full sequence is GMP synthase [glutamine-hydrolyzing] subunit A (186 aa).

A Glutamine amidotransferase type-1 domain is found at 3–186 (MILIINNHGQ…FENFYDVCRS (184 aa)). Residue C77 is the Nucleophile of the active site. Residues H164 and E166 contribute to the active site.

Heterodimer composed of a glutamine amidotransferase subunit (A) and a GMP-binding subunit (B).

It catalyses the reaction XMP + L-glutamine + ATP + H2O = GMP + L-glutamate + AMP + diphosphate + 2 H(+). It participates in purine metabolism; GMP biosynthesis; GMP from XMP (L-Gln route): step 1/1. Its function is as follows. Catalyzes the synthesis of GMP from XMP. In Methanothermobacter thermautotrophicus (strain ATCC 29096 / DSM 1053 / JCM 10044 / NBRC 100330 / Delta H) (Methanobacterium thermoautotrophicum), this protein is GMP synthase [glutamine-hydrolyzing] subunit A.